A 158-amino-acid polypeptide reads, in one-letter code: GTP-dependent dephospho-CoA kinase (158 aa).

Residues aspartate 35, valine 36, aspartate 54, lysine 56, glutamate 109, and aspartate 132 each contribute to the GTP site.

Belongs to the GTP-dependent DPCK family.

The catalysed reaction is 3'-dephospho-CoA + GTP = GDP + CoA + H(+). The protein operates within cofactor biosynthesis; coenzyme A biosynthesis. Functionally, catalyzes the GTP-dependent phosphorylation of the 3'-hydroxyl group of dephosphocoenzyme A to form coenzyme A (CoA). This Methanococcus vannielii (strain ATCC 35089 / DSM 1224 / JCM 13029 / OCM 148 / SB) protein is GTP-dependent dephospho-CoA kinase.